The primary structure comprises 72 residues: Translation initiation factor IF-1 (72 aa).

The S1-like domain occupies 1 to 72 (MAKEDVIEMQ…SKGRIVFRAR (72 aa)).

Belongs to the IF-1 family. In terms of assembly, component of the 30S ribosomal translation pre-initiation complex which assembles on the 30S ribosome in the order IF-2 and IF-3, IF-1 and N-formylmethionyl-tRNA(fMet); mRNA recruitment can occur at any time during PIC assembly.

It localises to the cytoplasm. One of the essential components for the initiation of protein synthesis. Stabilizes the binding of IF-2 and IF-3 on the 30S subunit to which N-formylmethionyl-tRNA(fMet) subsequently binds. Helps modulate mRNA selection, yielding the 30S pre-initiation complex (PIC). Upon addition of the 50S ribosomal subunit IF-1, IF-2 and IF-3 are released leaving the mature 70S translation initiation complex. The polypeptide is Translation initiation factor IF-1 (Photobacterium profundum (strain SS9)).